We begin with the raw amino-acid sequence, 337 residues long: Ornithine carbamoyltransferase (337 aa).

Residues 57 to 60 (STRT), Q84, R108, and 135 to 138 (HPTQ) each bind carbamoyl phosphate. L-ornithine-binding positions include N167, D231, and 235–236 (SM). Carbamoyl phosphate-binding positions include 272-273 (CL) and R317.

The protein belongs to the aspartate/ornithine carbamoyltransferase superfamily. OTCase family.

It localises to the cytoplasm. It catalyses the reaction carbamoyl phosphate + L-ornithine = L-citrulline + phosphate + H(+). It participates in amino-acid degradation; L-arginine degradation via ADI pathway; carbamoyl phosphate from L-arginine: step 2/2. In terms of biological role, reversibly catalyzes the transfer of the carbamoyl group from carbamoyl phosphate (CP) to the N(epsilon) atom of ornithine (ORN) to produce L-citrulline. The chain is Ornithine carbamoyltransferase from Streptococcus uberis (strain ATCC BAA-854 / 0140J).